The primary structure comprises 218 residues: MTQDELKKAVGWAALKYVRLGTIVGVGTGSTAAHFIDALASVRHQIDGAVSSSEASSAKLQSLGIPLFDLNEVDSLDIYVDGADEINGSMQMIKGGGAALTREKIIAAVARKFICIADSSKLVDVLGTFPLPVEVIPMARAWVARELVRLGGAPVYRQGVVTDNGNIILDVHNLAIMDAVALEEQINNIPGVVTVGLFARRGADVALIGSEQGVKIIG.

Substrate contacts are provided by residues 28 to 31 (TGST), 81 to 84 (DGAD), and 94 to 97 (KGGG). The active-site Proton acceptor is Glu-103. Residue Lys-121 participates in substrate binding.

This sequence belongs to the ribose 5-phosphate isomerase family. In terms of assembly, homodimer.

It carries out the reaction aldehydo-D-ribose 5-phosphate = D-ribulose 5-phosphate. It functions in the pathway carbohydrate degradation; pentose phosphate pathway; D-ribose 5-phosphate from D-ribulose 5-phosphate (non-oxidative stage): step 1/1. Its function is as follows. Catalyzes the reversible conversion of ribose-5-phosphate to ribulose 5-phosphate. In Sodalis glossinidius (strain morsitans), this protein is Ribose-5-phosphate isomerase A.